A 623-amino-acid chain; its full sequence is Procollagen galactosyltransferase 1 (623 aa).

Positions 1-30 are cleaved as a signal peptide; the sequence is MAAAPRACKGHGRPLPVLLLLLLLALPPLG. N-linked (GlcNAc...) asparagine glycosylation is found at Asn97, Asn185, and Asn382. Residues 589-607 are compositionally biased toward basic and acidic residues; the sequence is RAKSQKMREQQALSREAKN. Residues 589 to 623 form a disordered region; it reads RAKSQKMREQQALSREAKNSDVLQSPLDSAARDEL. The short motif at 620–623 is the Prevents secretion from ER element; that stretch reads RDEL.

The protein belongs to the glycosyltransferase 25 family. N-glycosylated.

The protein resides in the endoplasmic reticulum lumen. The catalysed reaction is (5R)-5-hydroxy-L-lysyl-[collagen] + UDP-alpha-D-galactose = (5R)-5-O-(beta-D-galactosyl)-5-hydroxy-L-lysyl-[collagen] + UDP + H(+). Beta-galactosyltransferase that transfers beta-galactose to hydroxylysine residues of type I collagen. By acting on collagen glycosylation, facilitates the formation of collagen triple helix. Also involved in the biosynthesis of collagen type IV. The chain is Procollagen galactosyltransferase 1 (COLGALT1) from Bos taurus (Bovine).